Here is a 346-residue protein sequence, read N- to C-terminus: UDP-N-acetylenolpyruvoylglucosamine reductase (346 aa).

Residues 23–194 (FDVRARLACR…VSVTFRLPKV (172 aa)) form the FAD-binding PCMH-type domain. R170 is an active-site residue. Catalysis depends on S246, which acts as the Proton donor. The active site involves E342.

The protein belongs to the MurB family. It depends on FAD as a cofactor.

The protein resides in the cytoplasm. The catalysed reaction is UDP-N-acetyl-alpha-D-muramate + NADP(+) = UDP-N-acetyl-3-O-(1-carboxyvinyl)-alpha-D-glucosamine + NADPH + H(+). It functions in the pathway cell wall biogenesis; peptidoglycan biosynthesis. Cell wall formation. In Paraburkholderia phymatum (strain DSM 17167 / CIP 108236 / LMG 21445 / STM815) (Burkholderia phymatum), this protein is UDP-N-acetylenolpyruvoylglucosamine reductase.